The following is a 677-amino-acid chain: Methionine--tRNA ligase (677 aa).

The 'HIGH' region signature appears at 15 to 25; that stretch reads PYANGSIHLGH. Residues cysteine 146, cysteine 149, cysteine 159, and cysteine 162 each contribute to the Zn(2+) site. The short motif at 333–337 is the 'KMSKS' region element; that stretch reads KMSKS. Residue lysine 336 coordinates ATP. The region spanning 575-677 is the tRNA-binding domain; that stretch reads DFAKIDLRVA…SGAKPGQQVK (103 aa).

Belongs to the class-I aminoacyl-tRNA synthetase family. MetG type 1 subfamily. As to quaternary structure, homodimer. Zn(2+) serves as cofactor.

It is found in the cytoplasm. It catalyses the reaction tRNA(Met) + L-methionine + ATP = L-methionyl-tRNA(Met) + AMP + diphosphate. Functionally, is required not only for elongation of protein synthesis but also for the initiation of all mRNA translation through initiator tRNA(fMet) aminoacylation. This chain is Methionine--tRNA ligase, found in Cronobacter sakazakii (strain ATCC BAA-894) (Enterobacter sakazakii).